The sequence spans 307 residues: Transcription factor bHLH127 (307 aa).

2 disordered regions span residues 41–68 (SDPLPILRGSGSGGREENTPLPPPLPHQ) and 101–155 (PHPQ…AEMH). Positions 110 to 119 (APPPPKPPSS) are enriched in pro residues. A bHLH domain is found at 150–199 (RAAEMHNLAERRRREKINERMKTLQQLIPRCNKSTKVSMLEDVIEYVKSL).

It belongs to the bHLH protein family. Homodimer.

It localises to the nucleus. The sequence is that of Transcription factor bHLH127 (BHLH127) from Arabidopsis thaliana (Mouse-ear cress).